A 354-amino-acid polypeptide reads, in one-letter code: Kelch domain-containing protein 8B (354 aa).

Kelch repeat units follow at residues 1 to 31, 32 to 79, 81 to 127, 128 to 175, 176 to 222, 224 to 281, 282 to 329, and 331 to 354; these read MATG…FQDG, HLLV…VLGK, VLVV…ERDG, MVYA…LHGN, KIYV…MAEG, VFSL…SLGD, HVVA…QAGP, and LFAI…RDGV.

It is found in the cytoplasm. It localises to the midbody. Involved in pinching off the separated nuclei at the cleavage furrow and in cytokinesis. Required for mitotic integrity and maintenance of chromosomal stability. Protects cells against mitotic errors, centrosomal amplification, micronucleus formation and aneuploidy. Plays a key role of midbody function involving abscission of the daughter cells during cytokinesis and appropriate chromosomal and nuclear segregation into the daughter cells. In Bos taurus (Bovine), this protein is Kelch domain-containing protein 8B (KLHDC8B).